Consider the following 328-residue polypeptide: MSWWTPQVAAIAFALFQAVVILLAAVGAAALLTMVERRLLGLWQDRHGPNRVGPFGVLQIVADMLKIVFKEDWIPPFADRGLFVLAPAIAMASLLLSFMVIPITPSWGVADLHIGLLFFFAMAGINVYAVLFAGWSSGNKYALLGAMRASAQTLSYEVFMGLSLMGVVAMAGSFNMREIVAAQETLWFIVPQFFGFCTFLVAGIAVTHRHPFDQPEAEQELADGYHIEYSGMKWGMFFVGEYVGIVLVSALMVTLFLGGWHGPWLPPIVWFLLKTAVFVGFFILLRAALPRPRYDAVMSFGWKVCLPLTLINLLVTGALILIFSPAGG.

8 helical membrane passes run 8-28, 81-101, 114-134, 154-174, 186-206, 237-257, 265-285, and 304-324; these read VAAIAFALFQAVVILLAAVGA, GLFVLAPAIAMASLLLSFMVI, IGLLFFFAMAGINVYAVLFAG, LSYEVFMGLSLMGVVAMAGSF, LWFIVPQFFGFCTFLVAGIAV, FFVGEYVGIVLVSALMVTLFL, LPPIVWFLLKTAVFVGFFILL, and VCLPLTLINLLVTGALILIFS.

It belongs to the complex I subunit 1 family. As to quaternary structure, NDH-1 is composed of 14 different subunits. Subunits NuoA, H, J, K, L, M, N constitute the membrane sector of the complex.

Its subcellular location is the cell inner membrane. The enzyme catalyses a quinone + NADH + 5 H(+)(in) = a quinol + NAD(+) + 4 H(+)(out). In terms of biological role, NDH-1 shuttles electrons from NADH, via FMN and iron-sulfur (Fe-S) centers, to quinones in the respiratory chain. The immediate electron acceptor for the enzyme in this species is believed to be ubiquinone. Couples the redox reaction to proton translocation (for every two electrons transferred, four hydrogen ions are translocated across the cytoplasmic membrane), and thus conserves the redox energy in a proton gradient. This subunit may bind ubiquinone. This Chromohalobacter salexigens (strain ATCC BAA-138 / DSM 3043 / CIP 106854 / NCIMB 13768 / 1H11) protein is NADH-quinone oxidoreductase subunit H.